The sequence spans 1173 residues: Pyruvate-flavodoxin oxidoreductase (1173 aa).

2 4Fe-4S ferredoxin-type domains span residues 681 to 710 (NVPVWQTDKCTQCNQCAFICPHAAIRPVLI) and 735 to 766 (YRLAVSPLDCSGCGNCADVCPVKGKALSMQPL). 11 residues coordinate [4Fe-4S] cluster: C690, C693, C696, C700, C744, C747, C750, C754, C810, C813, and C838. Residues 922 to 933 (GEGTRERAEKVG) are compositionally biased toward basic and acidic residues. Residues 922–946 (GEGTRERAEKVGDTSGFANAREKSR) are disordered. C1075 provides a ligand contact to [4Fe-4S] cluster.

Belongs to the pyruvate:ferredoxin/flavodoxin oxidoreductase family. Requires [4Fe-4S] cluster as cofactor.

It catalyses the reaction oxidized [flavodoxin] + pyruvate + CoA + 2 H(+) = reduced [flavodoxin] + acetyl-CoA + CO2. Oxidoreductase required for the transfer of electrons from pyruvate to flavodoxin, which reduces nitrogenase. The chain is Pyruvate-flavodoxin oxidoreductase (nifJ) from Enterobacter agglomerans (Erwinia herbicola).